The chain runs to 194 residues: Holliday junction branch migration complex subunit RuvA (194 aa).

The interval Met-1 to Ala-64 is domain I. The segment at Thr-65 to Ala-143 is domain II. Positions Ala-144 to Ala-147 are flexible linker. Positions Ala-147–Lys-194 are domain III.

This sequence belongs to the RuvA family. Homotetramer. Forms an RuvA(8)-RuvB(12)-Holliday junction (HJ) complex. HJ DNA is sandwiched between 2 RuvA tetramers; dsDNA enters through RuvA and exits via RuvB. An RuvB hexamer assembles on each DNA strand where it exits the tetramer. Each RuvB hexamer is contacted by two RuvA subunits (via domain III) on 2 adjacent RuvB subunits; this complex drives branch migration. In the full resolvosome a probable DNA-RuvA(4)-RuvB(12)-RuvC(2) complex forms which resolves the HJ.

It localises to the cytoplasm. The RuvA-RuvB-RuvC complex processes Holliday junction (HJ) DNA during genetic recombination and DNA repair, while the RuvA-RuvB complex plays an important role in the rescue of blocked DNA replication forks via replication fork reversal (RFR). RuvA specifically binds to HJ cruciform DNA, conferring on it an open structure. The RuvB hexamer acts as an ATP-dependent pump, pulling dsDNA into and through the RuvAB complex. HJ branch migration allows RuvC to scan DNA until it finds its consensus sequence, where it cleaves and resolves the cruciform DNA. The protein is Holliday junction branch migration complex subunit RuvA of Neisseria meningitidis serogroup A / serotype 4A (strain DSM 15465 / Z2491).